The following is a 375-amino-acid chain: Alcohol dehydrogenase 4, mitochondrial (375 aa).

A mitochondrion-targeting transit peptide spans 1–27; it reads MFRLARAQTALANKASVSRSFLRLNSS. Residues Cys-71, His-94, Cys-125, Cys-128, Cys-131, Cys-139, and Cys-181 each coordinate Zn(2+). NAD(+) is bound by residues 205 to 211, Asp-229, Lys-234, 296 to 298, and Arg-368; these read GAAGGLG and VGL.

Belongs to the zinc-containing alcohol dehydrogenase family. In terms of assembly, homotetramer. Zn(2+) is required as a cofactor.

The protein resides in the mitochondrion matrix. It catalyses the reaction a primary alcohol + NAD(+) = an aldehyde + NADH + H(+). It carries out the reaction a secondary alcohol + NAD(+) = a ketone + NADH + H(+). The chain is Alcohol dehydrogenase 4, mitochondrial (ADH4) from Kluyveromyces lactis (strain ATCC 8585 / CBS 2359 / DSM 70799 / NBRC 1267 / NRRL Y-1140 / WM37) (Yeast).